The following is a 129-amino-acid chain: Small ribosomal subunit protein uS11 (129 aa).

It belongs to the universal ribosomal protein uS11 family. Part of the 30S ribosomal subunit. Interacts with proteins S7 and S18. Binds to IF-3.

Its function is as follows. Located on the platform of the 30S subunit, it bridges several disparate RNA helices of the 16S rRNA. Forms part of the Shine-Dalgarno cleft in the 70S ribosome. In Psychrobacter arcticus (strain DSM 17307 / VKM B-2377 / 273-4), this protein is Small ribosomal subunit protein uS11.